A 158-amino-acid polypeptide reads, in one-letter code: Pleckstrin homology domain-containing family J member 1 (158 aa).

The 94-residue stretch at 15–108 (PTQRAAELGM…WIDAIIKASY (94 aa)) folds into the PH domain.

The polypeptide is Pleckstrin homology domain-containing family J member 1 (plekhj1) (Danio rerio (Zebrafish)).